A 514-amino-acid polypeptide reads, in one-letter code: Pleiotropic regulator 1 (514 aa).

Met-1 bears the N-acetylmethionine mark. The residue at position 119 (Ser-119) is a Phosphoserine. The segment at 135–160 (KADANRTAPSGSEYRHPGASDRPQPT) is disordered. Ser-201 carries the phosphoserine modification. WD repeat units lie at residues 202 to 241 (GHLG…LKLS), 244 to 283 (GHIS…VIRH), 286 to 325 (GHLS…SVHT), 328 to 367 (GHTN…TRVT), 370 to 410 (NHKK…QNLS), 411 to 449 (GHNA…NFQR), and 460 to 499 (DSES…TEET). A Phosphoserine modification is found at Ser-391.

This sequence belongs to the WD repeat PRL1/PRL2 family. As to quaternary structure, identified in the spliceosome C complex. Component of the PRP19-CDC5L splicing complex composed of a core complex comprising a homotetramer of PRPF19, CDC5L, PLRG1 and BCAS2, and at least three less stably associated proteins CTNNBL1, CWC15 and HSPA8. Interacts (via its WD40 repeat domain) directly with CDC5L (via its C-terminal); the interaction is required for mRNA splicing but not for spliceosome assembly. Component of the minor spliceosome, which splices U12-type introns. Within this complex, interacts with CRIPT. Also interacts directly in the complex with BCAS2 and PRPF19. Interacts with USB1.

The protein localises to the nucleus. It localises to the nucleus speckle. In terms of biological role, involved in pre-mRNA splicing as component of the spliceosome. Component of the PRP19-CDC5L complex that forms an integral part of the spliceosome and is required for activating pre-mRNA splicing. As a component of the minor spliceosome, involved in the splicing of U12-type introns in pre-mRNAs. This chain is Pleiotropic regulator 1 (PLRG1), found in Homo sapiens (Human).